A 512-amino-acid chain; its full sequence is MATDIDMLIDLGLDLSDSDLDEDPPEPAESRRDDLESDSSGECSSSDEDMEDPHGEDGPEPILDAARPAVRPSRPEDPGVPSTQTPRPTERQGPNDPQPAPHSVWSRLGARRPSCSPEQHGGKVARLQPPPTKAQPARGGRRGRRRGRGRGGPGAADGLSDPRRRAPRTNRNPGGPRPGAGWTDGPGAPHGEAWRGSEQPDPPGGQRTRGVRQAPPPLMTLAIAPPPADPRAPAPERKAPAADTIDATTRLVLRSISERAAVDRISESFGRSAQVMHDPFGGQPFPAANSPWAPVLAGQGGPFDAETRRVSWETLVAHGPSLYRTFAGNPRAASTAKAMRDCVLRQENFIEALASADETLAWCKMCIHHNLPLRPQDPIIGTTAAVLDNLATRLRPFLQCYLKARGLCGLDELCSRRRLADIKDIASFVFVILARLANRVERGVAEIDYATLGVGVGEKMHFYLPGACMAGLIEILDTHRQECSSRVCELTASHIVAPPYVHGKYFYCNSLF.

The span at 1-15 (MATDIDMLIDLGLDL) shows a compositional bias: low complexity. A disordered region spans residues 1–243 (MATDIDMLID…APERKAPAAD (243 aa)). A Nuclear export signal motif is present at residues 5–17 (IDMLIDLGLDLSD). Ser-16 and Ser-18 each carry phosphoserine; by host. Composition is skewed to acidic residues over residues 16–26 (SDSDLDEDPPE) and 35–51 (LESD…EDME). The tract at residues 104–112 (VWSRLGARR) is interaction with host ALYREF. The Nuclear localization signal signature appears at 110–138 (ARRPSCSPEQHGGKVARLQPPPTKAQPAR). Ser-114 carries the post-translational modification Phosphoserine; by host. Arg-138 carries the post-translational modification Dimethylated arginine; by host. Residues 138–152 (RGGRRGRRRGRGRGG) form an RGG-box region. Over residues 139–149 (GGRRGRRRGRG) the composition is skewed to basic residues. An Omega-N-methylarginine; by host modification is found at Arg-148. Dimethylated arginine; by host is present on Arg-150. A compositionally biased stretch (pro residues) spans 214 to 233 (APPPLMTLAIAPPPADPRAP). Zn(2+) is bound by residues Cys-400, His-479, Cys-483, and Cys-488. The CHC2-type zinc finger occupies 400 to 488 (CYLKARGLCG…HRQECSSRVC (89 aa)). Residues 500–512 (YVHGKYFYCNSLF) form an important for homodimerization region.

Belongs to the HHV-1 ICP27 protein family. Homodimer. Interacts with host RBP1; this interaction facilitates the RNA polymerase recruitment to viral transcription sites. Interacts (via the RGG box) with host ALYREF/THOC4; this interaction recruits ALYREF to viral replication compartments and probably directs viral mRNA to the TAP/NFX1 pathway. Interacts with host ALYREF2. Interacts (via the RGG box) with host SRPK1; this interaction relocalizes SRPK1 to the nucleus and seems to alter its activity. Interacts with ICP4; this interaction modulates ICP4 DNA-binding activity. Interacts with host NXF1; this interaction allows efficient export of HHV-1 early and late transcripts. In terms of processing, methylated within the RGG box possibly by host PRMT1. When hypomethylated, ICP27 is exported to the cytoplasm earlier and more rapidly. Post-translationally, phosphorylated.

The protein localises to the host cytoplasm. It is found in the host nucleus. Multifunctional regulator of the expression of viral genes that contributes to the shutoff of host protein synthesis and mediates nuclear export of viral intronless mRNAs. Early in infection, this immediate early (EI) protein mediates the inhibition of cellular splicing. This results in the accumulation of unprocessed 3'end pre-mRNAs which can't be exported from the nucleus. Cellular protein synthesis is thereby shut off early after virus infection. Later in the infection, it helps recruit cellular RNA polymerase II to viral replication sites and promotes the nuclear export of viral intronless mRNAs by interacting with mRNAs and host NXF1/TAP. ICP27 binds to NUP62 which may provide facilitated viral mRNA export and may indirectly compete with some host cell transport receptors for binding and inhibit cellular nucleocytoplasmic transport pathways. Also stimulates translation of viral transcripts. Repression of host gene expression blocks the cell cycle at the G1 phase and prevents apoptosis. Seems to silence the 3' splice site of the promyelocytic leukemia (PML) intron 7a, thereby switching PML isoforms from PML-II to PML-V. This could be linked to the accelerated mRNA export induced by ICP27 which might not provide sufficient time for PML pre-mRNA to be spliced in the nucleus. This Homo sapiens (Human) protein is mRNA export factor.